The sequence spans 811 residues: E3 ubiquitin-protein ligase RNF10 (811 aa).

Positions 1–10 (MPLSSPNAAA) are enriched in polar residues. The disordered stretch occupies residues 1-119 (MPLSSPNAAA…SFNGGRRDEV (119 aa)). S5 is modified (phosphoserine). 3 stretches are compositionally biased toward low complexity: residues 18-31 (NSGS…SGSS), 78-90 (NNQS…QKSK), and 104-113 (SKLFSSSFNG). An interaction with MEOX2 region spans residues 101–185 (GGSSKLFSSS…FNKELFLQAN (85 aa)). Phosphoserine is present on residues S110 and S128. The RING-type zinc-finger motif lies at 225 to 267 (CPICLYPPTAAKITRCGHIFCWACILHYLSLSEKTWSKCPICY). Positions 653–662 (DSALGPTSTE) are enriched in polar residues. 3 disordered regions span residues 653-672 (DSAL…ISPL), 724-761 (DVWP…VPSF), and 776-811 (LDTP…VHTK). Positions 724–736 (DVWPKTAPKKDEN) are enriched in basic and acidic residues. Residues 802-811 (LFSTSVVHTK) show a composition bias toward polar residues.

It belongs to the RNF10 family. In terms of assembly, interacts with MEOX2.

It localises to the cytoplasm. Its subcellular location is the nucleus. It catalyses the reaction S-ubiquitinyl-[E2 ubiquitin-conjugating enzyme]-L-cysteine + [acceptor protein]-L-lysine = [E2 ubiquitin-conjugating enzyme]-L-cysteine + N(6)-ubiquitinyl-[acceptor protein]-L-lysine.. It participates in protein modification; protein ubiquitination. Its function is as follows. E3 ubiquitin-protein ligase that catalyzes monoubiquitination of 40S ribosomal proteins RPS2/us5 and RPS3/us3 in response to ribosome stalling. Part of a ribosome quality control that takes place when ribosomes have stalled during translation initiation (iRQC): RNF10 acts by mediating monoubiquitination of RPS2/us5 and RPS3/us3, promoting their degradation by the proteasome. Also promotes ubiquitination of 40S ribosomal proteins in response to ribosome stalling during translation elongation. The action of RNF10 in iRQC is counteracted by USP10. May also act as a transcriptional factor involved in the regulation of MAG (Myelin-associated glycoprotein) expression. Acts as a regulator of Schwann cell differentiation and myelination. The polypeptide is E3 ubiquitin-protein ligase RNF10 (Homo sapiens (Human)).